We begin with the raw amino-acid sequence, 664 residues long: Transketolase 1 (664 aa).

A substrate-binding site is contributed by histidine 26. Residues histidine 66 and 114 to 116 (GPL) each bind thiamine diphosphate. Aspartate 155 is a binding site for Mg(2+). The thiamine diphosphate site is built by glycine 156 and asparagine 185. Mg(2+)-binding residues include asparagine 185 and isoleucine 187. Substrate contacts are provided by histidine 260, arginine 357, and serine 384. Histidine 260 contacts thiamine diphosphate. Glutamate 411 serves as the catalytic Proton donor. Phenylalanine 437 lines the thiamine diphosphate pocket. Substrate is bound by residues histidine 461, aspartate 469, and arginine 520.

This sequence belongs to the transketolase family. Homodimer. Requires Mg(2+) as cofactor. The cofactor is Ca(2+). It depends on Mn(2+) as a cofactor. Co(2+) serves as cofactor. Thiamine diphosphate is required as a cofactor.

The catalysed reaction is D-sedoheptulose 7-phosphate + D-glyceraldehyde 3-phosphate = aldehydo-D-ribose 5-phosphate + D-xylulose 5-phosphate. Its function is as follows. Catalyzes the transfer of a two-carbon ketol group from a ketose donor to an aldose acceptor, via a covalent intermediate with the cofactor thiamine pyrophosphate. In Vibrio parahaemolyticus serotype O3:K6 (strain RIMD 2210633), this protein is Transketolase 1 (tkt1).